We begin with the raw amino-acid sequence, 599 residues long: Elongation factor 4 (599 aa).

The 183-residue stretch at 2 to 184 (KNIRNFSIIA…RLVRDIPPPE (183 aa)) folds into the tr-type G domain. GTP contacts are provided by residues 14–19 (DHGKST) and 131–134 (NKID).

The protein belongs to the TRAFAC class translation factor GTPase superfamily. Classic translation factor GTPase family. LepA subfamily.

It localises to the cell inner membrane. It catalyses the reaction GTP + H2O = GDP + phosphate + H(+). Its function is as follows. Required for accurate and efficient protein synthesis under certain stress conditions. May act as a fidelity factor of the translation reaction, by catalyzing a one-codon backward translocation of tRNAs on improperly translocated ribosomes. Back-translocation proceeds from a post-translocation (POST) complex to a pre-translocation (PRE) complex, thus giving elongation factor G a second chance to translocate the tRNAs correctly. Binds to ribosomes in a GTP-dependent manner. The chain is Elongation factor 4 from Klebsiella pneumoniae (strain 342).